The sequence spans 179 residues: Alpha-S2-casein-like A (179 aa).

The N-terminal stretch at 1 to 15 (MKFFIFTCLVAAALA) is a signal peptide. Phosphoserine is present on residues serine 24 and serine 25. The interval 44 to 121 (FQTPQDSASS…NAIYDVPSQE (78 aa)) is disordered. Residues 63–74 (ISEKIEQSEEQK) are compositionally biased toward basic and acidic residues. Residues 93–110 (PQICTPYQQQSSVNQRPQ) are compositionally biased toward polar residues.

The protein belongs to the alpha-casein family. As to expression, mammary gland specific. Secreted in milk.

It localises to the secreted. In terms of biological role, important role in the capacity of milk to transport calcium phosphate. The protein is Alpha-S2-casein-like A (Csn1s2a) of Rattus norvegicus (Rat).